A 518-amino-acid polypeptide reads, in one-letter code: Serine--tRNA ligase, mitochondrial (518 aa).

Residues 1 to 34 (MAASIVRRLGPLVAGRGLRLRGGCVCNQSFKRSF) constitute a mitochondrion transit peptide. At Lys-110 the chain carries N6-acetyllysine. N6-succinyllysine is present on Lys-195. 299–301 (TAE) provides a ligand contact to L-serine. Residue 330–332 (RAE) coordinates ATP. Lys-337 is modified (N6-succinyllysine). Val-345 is a binding site for ATP. Residue Glu-352 participates in L-serine binding. Position 418–421 (418–421 (EVTS)) interacts with ATP. Thr-453 is an L-serine binding site. Residues 497-518 (PLQYIGPNQPQKPRLPGQPASS) are disordered.

Belongs to the class-II aminoacyl-tRNA synthetase family. Type-1 seryl-tRNA synthetase subfamily. In terms of assembly, homodimer. The tRNA molecule probably binds across the dimer. Post-translationally, two N-termini starting at positions 35 and 37 have been identified by direct sequencing.

The protein resides in the mitochondrion matrix. The catalysed reaction is tRNA(Ser) + L-serine + ATP = L-seryl-tRNA(Ser) + AMP + diphosphate + H(+). It catalyses the reaction tRNA(Sec) + L-serine + ATP = L-seryl-tRNA(Sec) + AMP + diphosphate + H(+). The protein operates within aminoacyl-tRNA biosynthesis; selenocysteinyl-tRNA(Sec) biosynthesis; L-seryl-tRNA(Sec) from L-serine and tRNA(Sec): step 1/1. In terms of biological role, catalyzes the attachment of serine to tRNA(Ser). Is also probably able to aminoacylate tRNA(Sec) with serine, to form the misacylated tRNA L-seryl-tRNA(Sec), which will be further converted into selenocysteinyl-tRNA(Sec). The polypeptide is Serine--tRNA ligase, mitochondrial (SARS2) (Bos taurus (Bovine)).